Consider the following 324-residue polypeptide: S-methyl-5'-thioadenosine phosphorylase (324 aa).

Phosphate-binding positions include serine 14, 57–58 (RH), and 90–91 (SA). Substrate is bound at residue methionine 196. Serine 197 provides a ligand contact to phosphate. 220–222 (DYD) lines the substrate pocket.

This sequence belongs to the PNP/MTAP phosphorylase family. MTAP subfamily. Homotrimer.

The protein localises to the cytoplasm. Its subcellular location is the nucleus. It catalyses the reaction S-methyl-5'-thioadenosine + phosphate = 5-(methylsulfanyl)-alpha-D-ribose 1-phosphate + adenine. It functions in the pathway amino-acid biosynthesis; L-methionine biosynthesis via salvage pathway; S-methyl-5-thio-alpha-D-ribose 1-phosphate from S-methyl-5'-thioadenosine (phosphorylase route): step 1/1. Functionally, catalyzes the reversible phosphorylation of S-methyl-5'-thioadenosine (MTA) to adenine and 5-methylthioribose-1-phosphate. Involved in the breakdown of MTA, a major by-product of polyamine biosynthesis. Responsible for the first step in the methionine salvage pathway after MTA has been generated from S-adenosylmethionine. Has broad substrate specificity with 6-aminopurine nucleosides as preferred substrates. The polypeptide is S-methyl-5'-thioadenosine phosphorylase (Coprinopsis cinerea (strain Okayama-7 / 130 / ATCC MYA-4618 / FGSC 9003) (Inky cap fungus)).